The sequence spans 246 residues: Putative pectinesterase 57 (246 aa).

Residues Asn127 and Asn143 are each glycosylated (N-linked (GlcNAc...) asparagine). Position 152 (Thr152) interacts with substrate. N-linked (GlcNAc...) asparagine glycosylation is present at Asn174. The active-site Proton donor is Asp205. Asp226 (nucleophile) is an active-site residue.

It belongs to the pectinesterase family.

It catalyses the reaction [(1-&gt;4)-alpha-D-galacturonosyl methyl ester](n) + n H2O = [(1-&gt;4)-alpha-D-galacturonosyl](n) + n methanol + n H(+). It functions in the pathway glycan metabolism; pectin degradation; 2-dehydro-3-deoxy-D-gluconate from pectin: step 1/5. In terms of biological role, acts in the modification of cell walls via demethylesterification of cell wall pectin. This is Putative pectinesterase 57 (PME57) from Arabidopsis thaliana (Mouse-ear cress).